Reading from the N-terminus, the 168-residue chain is Cytochrome c-type biogenesis protein CcmE (168 aa).

The Cytoplasmic portion of the chain corresponds to 1 to 23; that stretch reads MTTAPSGLPGTPLPPARRRERPR. The helical; Signal-anchor for type II membrane protein transmembrane segment at 24 to 44 threads the bilayer; sequence WPLLVAGAAVLGLIGYMVLGN. At 45–168 the chain is on the extracellular side; it reads ANSNLVYYVL…KILNDQSTKP (124 aa). The heme site is built by His137 and Tyr141. The segment at 145–168 is disordered; it reads DSKGEGQYSQDDLKKILNDQSTKP.

The protein belongs to the CcmE/CycJ family.

Its subcellular location is the cell membrane. Heme chaperone required for the biogenesis of c-type cytochromes. Transiently binds heme delivered by CcmC and transfers the heme to apo-cytochromes in a process facilitated by CcmF and CcmH. The protein is Cytochrome c-type biogenesis protein CcmE of Deinococcus radiodurans (strain ATCC 13939 / DSM 20539 / JCM 16871 / CCUG 27074 / LMG 4051 / NBRC 15346 / NCIMB 9279 / VKM B-1422 / R1).